A 784-amino-acid polypeptide reads, in one-letter code: Toll-like receptor 2 (784 aa).

Residues 1-20 (MPRALWTAWVWAVIILSMEG) form the signal peptide. The Extracellular segment spans residues 21 to 587 (ASHQASSLSC…ARLSLSECHR (567 aa)). Cysteines 30 and 36 form a disulfide. LRR repeat units lie at residues 54–77 (VKSL…RCVN), 78–101 (LKTL…HLRN), 102–125 (LEYL…SLYA), 126–150 (LKFL…HLPN), 151–175 (LRTL…GLIF), 176–199 (LEEL…SIQN), 200–223 (ISHL…IVSS), 224–250 (LDCL…MNTS), 251–278 (VKKL…YVSG), 279–308 (ILEV…HLGN), 309–337 (VETL…LTGK), 338–361 (VKRV…HLKS), 362–388 (LEYL…AWPF), 389–414 (LQTL…TLEN), 415–437 (LNNL…WPGK), 438–457 (MKQL…CLPQ), 458–478 (TLEI…ILPQ), 479–500 (LKEL…FLPV), and 501–524 (LSVM…SFQQ). The N-linked (GlcNAc...) asparagine glycan is linked to N114. N199 is a glycosylation site (N-linked (GlcNAc...) asparagine). N-linked (GlcNAc...) asparagine glycosylation occurs at N248. Residues C353 and C382 are joined by a disulfide bond. Cysteines 432 and 454 form a disulfide. N442 carries an N-linked (GlcNAc...) asparagine glycan. Positions 525 to 579 (LKTLEAGGNNFICSCDFLSFTQGQQALGRVLVDWPAEYRCDSPSHVRGQRVQDAR) constitute an LRRCT domain. A helical transmembrane segment spans residues 588–608 (AAVVSAACCALFLLLLLTGVL). Over 609–784 (CHRFHGLWYM…WLNLRAAIRS (176 aa)) the chain is Cytoplasmic. Residues 639–782 (ICYDAFVSYS…GFWLNLRAAI (144 aa)) enclose the TIR domain. Residue K754 forms a Glycyl lysine isopeptide (Lys-Gly) (interchain with G-Cter in ubiquitin) linkage. The ATG16L1-binding motif motif lies at 761–778 (YLEWPVDETQQEGFWLNL).

It belongs to the Toll-like receptor family. As to quaternary structure, interacts with LY96, TLR1 and TLR6 (via extracellular domain). TLR2 seems to exist in heterodimers with either TLR1 or TLR6 before stimulation by the ligand. The heterodimers form bigger oligomers in response to their corresponding ligands as well as further heterotypic associations with other receptors such as CD14 and/or CD36. Binds MYD88 (via TIR domain). Interacts with TICAM1. Interacts with CNPY3. Interacts with ATG16L1. Interacts with PPP1R11. Interacts with TICAM2. Interacts with TIRAP. In terms of processing, ubiquitinated at Lys-754 by PPP1R11, leading to its degradation. Deubiquitinated by USP2. Post-translationally, glycosylation of Asn-442 is critical for secretion of the N-terminal ectodomain of TLR2.

Its subcellular location is the membrane. It localises to the cytoplasmic vesicle. The protein resides in the phagosome membrane. The protein localises to the membrane raft. Its function is as follows. Cooperates with LY96 to mediate the innate immune response to bacterial lipoproteins and other microbial cell wall components. Cooperates with TLR1 or TLR6 to mediate the innate immune response to bacterial lipoproteins or lipopeptides. Acts via MYD88 and TRAF6, leading to NF-kappa-B activation, cytokine secretion and the inflammatory response. May also promote apoptosis in response to lipoproteins. Forms activation clusters composed of several receptors depending on the ligand, these clusters trigger signaling from the cell surface and subsequently are targeted to the Golgi in a lipid-raft dependent pathway. Forms the cluster TLR2:TLR6:CD14:CD36 in response to diacylated lipopeptides and TLR2:TLR1:CD14 in response to triacylated lipopeptides. In Bubalus bubalis (Domestic water buffalo), this protein is Toll-like receptor 2 (TLR2).